A 965-amino-acid polypeptide reads, in one-letter code: Collagen alpha-1(I) chain (965 aa).

Residues 1 to 965 form a disordered region; the sequence is GGISVPGPMG…PGPPGPPGPP (965 aa). Residues Pro18, Pro21, Pro23, Pro32, Pro35, Pro38, Pro53, Pro68, Pro74, Pro83, and Pro89 each carry the 4-hydroxyproline modification. Low complexity predominate over residues 26-44; that stretch reads QGFQGPPGEPGEPGSSGPM. A compositionally biased stretch (basic and acidic residues) spans 56 to 70; sequence NGDDGEAGKPGRPGE. Lys92 is modified (5-hydroxylysine; alternate). Lys92 carries an O-linked (Gal...) hydroxylysine; alternate glycan. Residue Ser98 is modified to Phosphoserine. Positions 106-122 are enriched in low complexity; sequence DAGPAGPKGEPGSPGEN. 4-hydroxyproline is present on residues Pro116, Pro119, Pro125, Pro139, Pro160, Pro169, Pro172, Pro199, Pro202, Pro214, Pro220, Pro229, Pro235, Pro238, and Pro253. Residues 139-157 show a composition bias toward low complexity; the sequence is PGASGPAGARGNDGATGAA. A compositionally biased stretch (pro residues) spans 159–171; it reads PPGPTGPAGPPGF. Over residues 205–244 the composition is skewed to low complexity; it reads AGAAGPAGNPGADGQPGAKGANGAPGIAGAPGFPGARGPS. 5-hydroxylysine is present on Lys256. 8 positions are modified to 4-hydroxyproline: Pro262, Pro265, Pro269, Pro278, Pro293, Pro299, Pro308, and Pro314. Positions 303-312 are enriched in gly residues; it reads GERGGPGSRG. Residue Lys323 is modified to 5-hydroxylysine. A 4-hydroxyproline mark is found at Pro326, Pro332, Pro338, Pro347, Pro350, Pro359, Pro368, Pro374, Pro386, Pro395, Pro404, Pro407, Pro425, Pro442, Pro448, Pro454, Pro460, Pro466, Pro472, Pro484, Pro493, Pro506, Pro512, and Pro521. Over residues 341 to 367 the composition is skewed to low complexity; it reads KGLTGSPGSPGPDGKTGPPGPAGQDGR. The span at 376–395 shows a compositional bias: low complexity; that stretch reads ARGQAGVMGFPGPKGAAGEP. The span at 454 to 463 shows a compositional bias: low complexity; the sequence is PGEAGKPGEQ. The residue at position 533 (Lys533) is a 5-hydroxylysine. A 4-hydroxyproline mark is found at Pro539, Pro554, and Pro560. Low complexity predominate over residues 566–580; the sequence is SGPSGPAGPTGARGA. Ser569 is modified (phosphoserine). A 4-hydroxyproline mark is found at Pro581, Pro587, Pro590, Pro599, Pro605, Pro623, Pro632, and Pro641. Over residues 593–620 the composition is skewed to low complexity; the sequence is AGFAGPPGADGQPGAKGEPGDAGAKGDA. Lys644 carries the 5-hydroxylysine modification. The segment covering 649–665 has biased composition (low complexity); sequence SAGPPGATGFPGAAGRV. 4-hydroxyproline is present on residues Pro653 and Pro659. Residue Pro667 is modified to 3-hydroxyproline. 4-hydroxyproline occurs at positions 668, 677, 680, 716, 725, 743, 752, 755, 761, 776, 782, 788, 796, and 802. Over residues 710–725 the composition is skewed to low complexity; it reads SGEKGSPGADGPAGAP. Over residues 775–785 the composition is skewed to pro residues; the sequence is PPGPMGPPGLA. The residue at position 811 (Lys811) is a 5-hydroxylysine. 4-hydroxyproline occurs at positions 819, 822, and 825. Over residues 819-831 the composition is skewed to pro residues; that stretch reads PGAPGAPGAPGPV. Residues 851–865 are compositionally biased toward low complexity; that stretch reads AGPAGARGPAGPQGP. Basic and acidic residues predominate over residues 866–880; it reads RGDKGETGEQGDRGI. Position 869 is a 5-hydroxylysine (Lys869). Residue Lys881 is modified to 5-hydroxylysine; alternate. O-linked (Gal...) hydroxylysine; alternate glycosylation is present at Lys881. Residues Pro896, Pro899, Pro917, and Pro932 each carry the 4-hydroxyproline modification. Positions 899-932 are enriched in low complexity; sequence PGEQGPSGASGPAGPRGPPGSAGSPGKDGLNGLP. The residue at position 937 (Pro937) is a 3-hydroxyproline. Pro938 carries the post-translational modification 4-hydroxyproline. A compositionally biased stretch (pro residues) spans 950–965; sequence VGPPGPPGPPGPPGPP. At Pro952 the chain carries 3-hydroxyproline. Position 953 is a 4-hydroxyproline (Pro953). Pro955 bears the 3-hydroxyproline mark. Pro956 is modified (4-hydroxyproline). Pro958 is subject to 3-hydroxyproline. 4-hydroxyproline occurs at positions 959, 962, and 965.

This sequence belongs to the fibrillar collagen family. In terms of assembly, trimers of one alpha 2(I) and two alpha 1(I) chains. Contains mostly 4-hydroxyproline. Proline residues at the third position of the tripeptide repeating unit (G-X-Y) are hydroxylated in some or all of the chains. Post-translationally, contains 3-hydroxyproline at a few sites. This modification occurs on the first proline residue in the sequence motif Gly-Pro-Hyp, where Hyp is 4-hydroxyproline. In terms of processing, lysine residues at the third position of the tripeptide repeating unit (G-X-Y) are 5-hydroxylated in some or all of the chains. O-glycosylated on hydroxylated lysine residues. The O-linked glycan consists of a Glc-Gal disaccharide. In terms of tissue distribution, expressed in bones.

Its subcellular location is the secreted. The protein localises to the extracellular space. It is found in the extracellular matrix. Functionally, type I collagen is a member of group I collagen (fibrillar forming collagen). This is Collagen alpha-1(I) chain from Acratocnus sp. (strain SLP-2019) (Ground sloth).